Here is a 170-residue protein sequence, read N- to C-terminus: 3-hydroxydecanoyl-[acyl-carrier-protein] dehydratase (170 aa).

The active site involves H69.

The protein belongs to the thioester dehydratase family. FabA subfamily. In terms of assembly, homodimer.

The protein localises to the cytoplasm. The catalysed reaction is a (3R)-hydroxyacyl-[ACP] = a (2E)-enoyl-[ACP] + H2O. The enzyme catalyses (3R)-hydroxydecanoyl-[ACP] = (2E)-decenoyl-[ACP] + H2O. It carries out the reaction (2E)-decenoyl-[ACP] = (3Z)-decenoyl-[ACP]. It functions in the pathway lipid metabolism; fatty acid biosynthesis. In terms of biological role, necessary for the introduction of cis unsaturation into fatty acids. Catalyzes the dehydration of (3R)-3-hydroxydecanoyl-ACP to E-(2)-decenoyl-ACP and then its isomerization to Z-(3)-decenoyl-ACP. Can catalyze the dehydratase reaction for beta-hydroxyacyl-ACPs with saturated chain lengths up to 16:0, being most active on intermediate chain length. This Caulobacter vibrioides (strain ATCC 19089 / CIP 103742 / CB 15) (Caulobacter crescentus) protein is 3-hydroxydecanoyl-[acyl-carrier-protein] dehydratase.